The sequence spans 227 residues: Orotidine 5'-phosphate decarboxylase (227 aa).

Substrate contacts are provided by residues Asp-8, Lys-30, 59–68 (DLKLYDIPNT), Thr-118, Arg-178, Gln-187, Gly-207, and Arg-208. Lys-61 functions as the Proton donor in the catalytic mechanism.

The protein belongs to the OMP decarboxylase family. Type 1 subfamily. As to quaternary structure, homodimer.

It carries out the reaction orotidine 5'-phosphate + H(+) = UMP + CO2. It participates in pyrimidine metabolism; UMP biosynthesis via de novo pathway; UMP from orotate: step 2/2. Functionally, catalyzes the decarboxylation of orotidine 5'-monophosphate (OMP) to uridine 5'-monophosphate (UMP). The polypeptide is Orotidine 5'-phosphate decarboxylase (Nitratiruptor sp. (strain SB155-2)).